A 108-amino-acid chain; its full sequence is Ig light chain C region (108 aa).

One can recognise an Ig-like domain in the interval 7–102 (PTVSIYCPSL…LTPALAKSFQ (96 aa)). 2 cysteine pairs are disulfide-bonded: Cys13-Cys106 and Cys28-Cys86.

The chain is Ig light chain C region from Aquarana catesbeiana (American bullfrog).